Reading from the N-terminus, the 84-residue chain is MDRRLSKKEEERIVNELNKLQMIEMVDTSVNLTNKCFQSCITNFRIRKLDDEEQLCVYKCVEKNMFFTSALNNHFMKLSNEGMF.

The Twin CX3C motif motif lies at 36–60; it reads CFQSCITNFRIRKLDDEEQLCVYKC. 2 disulfides stabilise this stretch: cysteine 36–cysteine 60 and cysteine 40–cysteine 56.

The protein belongs to the small Tim family. As to quaternary structure, heterohexamer; composed of 3 copies of timm9 and 3 copies of timm10, named soluble 70 kDa complex. Associates directly with the TIM22 complex, whose core is composed of timm22. Interacts with the transmembrane regions of multi-pass transmembrane proteins in transit.

It localises to the mitochondrion inner membrane. Its function is as follows. Component of the TIM22 complex, a complex that mediates the import and insertion of multi-pass transmembrane proteins into the mitochondrial inner membrane. The TIM22 complex forms a twin-pore translocase that uses the membrane potential as external driving force. The sequence is that of Mitochondrial import inner membrane translocase subunit Tim9 (timm9) from Dictyostelium discoideum (Social amoeba).